The primary structure comprises 120 residues: BLOC-1-related complex subunit 8 (120 aa).

Residues 101 to 120 (MNTSAQGHSQEKLSPPPSLA) form a disordered region. The residue at position 109 (S109) is a Phosphoserine.

It belongs to the BORCS8 family. Component of the BLOC-one-related complex (BORC) which is composed of BLOC1S1, BLOC1S2, BORCS5, BORCS6, BORCS7, BORCS8, KXD1 and SNAPIN.

Its subcellular location is the lysosome membrane. As part of the BLOC-one-related complex (BORC), it plays a role in the movement and localization of lysosomes at the cell periphery. Associated with the cytosolic face of lysosomes, BORC recruits ARL8B to the lysosomal membrane and couples lysosomes to microtubule plus-end-directed kinesin motors, driving lysosome movement toward the cell periphery. This chain is BLOC-1-related complex subunit 8, found in Mus musculus (Mouse).